The sequence spans 72 residues: MIKEDNIEMHGIVLDTLPNTMFRVQLENGHKITAHISGKIRKNYIRILTGDKVTVELTPYDLSKGRIIFRSR.

In terms of domain architecture, S1-like spans 1 to 72 (MIKEDNIEMH…SKGRIIFRSR (72 aa)).

Belongs to the IF-1 family. As to quaternary structure, component of the 30S ribosomal translation pre-initiation complex which assembles on the 30S ribosome in the order IF-2 and IF-3, IF-1 and N-formylmethionyl-tRNA(fMet); mRNA recruitment can occur at any time during PIC assembly.

The protein localises to the cytoplasm. Functionally, one of the essential components for the initiation of protein synthesis. Stabilizes the binding of IF-2 and IF-3 on the 30S subunit to which N-formylmethionyl-tRNA(fMet) subsequently binds. Helps modulate mRNA selection, yielding the 30S pre-initiation complex (PIC). Upon addition of the 50S ribosomal subunit IF-1, IF-2 and IF-3 are released leaving the mature 70S translation initiation complex. In Blochmanniella floridana, this protein is Translation initiation factor IF-1.